Consider the following 333-residue polypeptide: Transmembrane protein I329L (333 aa).

Residues 1–31 (MLRVFIFFVFLGSGLTGRIKPQITCKYFISE) form the signal peptide. N-linked (GlcNAc...) asparagine; by host glycosylation is found at Asn32, Asn39, Asn44, Asn76, Asn82, and Asn101. At 32 to 239 (NNTWYKYNVT…NTERYKSCYP (208 aa)) the chain is on the extracellular side. Residues 112 to 133 (ELKFLDLRYNDLQVIEYNILRK) form an LRR repeat. Asn181, Asn185, and Asn219 each carry an N-linked (GlcNAc...) asparagine; by host glycan. An intrachain disulfide couples Cys195 to Cys237. A helical membrane pass occupies residues 240 to 260 (LVFISILCSCISFLFLFICLL). The Cytoplasmic portion of the chain corresponds to 261–333 (RSICKKYSCT…EKKVSCSRRK (73 aa)).

It belongs to the asfivirus I329L family. Highly glycosylated.

It is found in the host endoplasmic reticulum membrane. The protein localises to the host Golgi apparatus membrane. In terms of biological role, viral TLR3 homolog that probably prevents TLR3 dimerization and subsequent induction of IFN. Inhibits dsRNA-stimulated activation of NF-kB and IRF3. This is Transmembrane protein I329L from Ornithodoros (relapsing fever ticks).